A 217-amino-acid chain; its full sequence is Probable transaldolase (217 aa).

Catalysis depends on K83, which acts as the Schiff-base intermediate with substrate.

This sequence belongs to the transaldolase family. Type 3B subfamily.

Its subcellular location is the cytoplasm. It carries out the reaction D-sedoheptulose 7-phosphate + D-glyceraldehyde 3-phosphate = D-erythrose 4-phosphate + beta-D-fructose 6-phosphate. It functions in the pathway carbohydrate degradation; pentose phosphate pathway; D-glyceraldehyde 3-phosphate and beta-D-fructose 6-phosphate from D-ribose 5-phosphate and D-xylulose 5-phosphate (non-oxidative stage): step 2/3. Transaldolase is important for the balance of metabolites in the pentose-phosphate pathway. In Paracoccus denitrificans (strain Pd 1222), this protein is Probable transaldolase.